The chain runs to 343 residues: Anthranilate phosphoribosyltransferase (343 aa).

5-phospho-alpha-D-ribose 1-diphosphate is bound by residues G84, 87-88, T92, 94-97, 112-120, and S124; these read GD, NIST, and KHGNRSASS. An anthranilate-binding site is contributed by G84. S96 serves as a coordination point for Mg(2+). N115 lines the anthranilate pocket. An anthranilate-binding site is contributed by R170. D229 and E230 together coordinate Mg(2+).

This sequence belongs to the anthranilate phosphoribosyltransferase family. Homodimer. Requires Mg(2+) as cofactor.

It catalyses the reaction N-(5-phospho-beta-D-ribosyl)anthranilate + diphosphate = 5-phospho-alpha-D-ribose 1-diphosphate + anthranilate. It functions in the pathway amino-acid biosynthesis; L-tryptophan biosynthesis; L-tryptophan from chorismate: step 2/5. In terms of biological role, catalyzes the transfer of the phosphoribosyl group of 5-phosphorylribose-1-pyrophosphate (PRPP) to anthranilate to yield N-(5'-phosphoribosyl)-anthranilate (PRA). In Bordetella bronchiseptica (strain ATCC BAA-588 / NCTC 13252 / RB50) (Alcaligenes bronchisepticus), this protein is Anthranilate phosphoribosyltransferase.